A 286-amino-acid chain; its full sequence is Ribosome-inactivating protein momordin II (286 aa).

A signal peptide spans 1-23 (MVKCLLLSFLIIAIFIGVPTAKG). Glutamate 181 is a catalytic residue.

The protein belongs to the ribosome-inactivating protein family. Type 1 RIP subfamily.

It carries out the reaction Endohydrolysis of the N-glycosidic bond at one specific adenosine on the 28S rRNA.. The protein is Ribosome-inactivating protein momordin II of Momordica balsamina (Bitter gourd).